The primary structure comprises 123 residues: Large ribosomal subunit protein bL12 (123 aa).

This sequence belongs to the bacterial ribosomal protein bL12 family. Homodimer. Part of the ribosomal stalk of the 50S ribosomal subunit. Forms a multimeric L10(L12)X complex, where L10 forms an elongated spine to which 2 to 4 L12 dimers bind in a sequential fashion. Binds GTP-bound translation factors.

Its function is as follows. Forms part of the ribosomal stalk which helps the ribosome interact with GTP-bound translation factors. Is thus essential for accurate translation. The chain is Large ribosomal subunit protein bL12 from Clostridium acetobutylicum (strain ATCC 824 / DSM 792 / JCM 1419 / IAM 19013 / LMG 5710 / NBRC 13948 / NRRL B-527 / VKM B-1787 / 2291 / W).